The following is a 360-amino-acid chain: Peptide chain release factor 1 (360 aa).

Glutamine 235 is modified (N5-methylglutamine). Residues 284-312 (AKRQQAEASTRRNLLGSGDRSDRNRTYNF) are disordered.

This sequence belongs to the prokaryotic/mitochondrial release factor family. In terms of processing, methylated by PrmC. Methylation increases the termination efficiency of RF1.

It is found in the cytoplasm. Its function is as follows. Peptide chain release factor 1 directs the termination of translation in response to the peptide chain termination codons UAG and UAA. This is Peptide chain release factor 1 from Escherichia coli O81 (strain ED1a).